The primary structure comprises 584 residues: HERV-H_2q24.3 provirus ancestral Env polyprotein (584 aa).

The signal sequence occupies residues 1–35 (MIFAGKAPSNTSTLMKFYSLLLYSLLFSFPFLCHP). Residues 36 to 523 (LPLPSYLHHT…WALSNWMSWV (488 aa)) lie on the Extracellular side of the membrane. N-linked (GlcNAc...) asparagine glycosylation occurs at asparagine 47. Residues 64 to 67 (CWLC) carry the CXXC motif. Residues asparagine 199, asparagine 222, asparagine 265, asparagine 283, asparagine 352, and asparagine 370 are each glycosylated (N-linked (GlcNAc...) asparagine). Residues 388-408 (VIPLIPLMVGLGLSASTVALG) form a fusion peptide region. Residues 454 to 470 (LQNRRGLDLLTAEKGGL) carry the CKS-17 motif. A disulfide bridge connects residues cysteine 471 and cysteine 478. Residues 471-479 (CIFLNEECC) carry the CX6CC motif. N-linked (GlcNAc...) asparagine glycosylation occurs at asparagine 483. A helical transmembrane segment spans residues 524–544 (LPIVSPLIPIFLLLLFGPCIF). At 545 to 584 (RLVSQFIQNRIQAITNHSIRQMFLLTSPQYHPLPQDLPSA) the chain is on the cytoplasmic side.

Belongs to the gamma type-C retroviral envelope protein family. HERV class-I H env subfamily. The surface (SU) and transmembrane (TM) proteins form a heterodimer. SU and TM are attached by noncovalent interactions or by a labile interchain disulfide bond. Post-translationally, specific enzymatic cleavages in vivo yield the mature SU and TM proteins. The CXXC motif is highly conserved across a broad range of retroviral envelope proteins. It is thought to participate in the formation of a labile disulfide bond possibly with the CX6CC motif present in the transmembrane protein. Isomerization of the intersubunit disulfide bond to an SU intrachain disulfide bond is thought to occur upon receptor recognition in order to allow membrane fusion. Low expression in skin and testis. No expression in several cell lines.

Its subcellular location is the virion. It is found in the cell membrane. Functionally, retroviral envelope proteins mediate receptor recognition and membrane fusion during early infection. Endogenous envelope proteins may have kept, lost or modified their original function during evolution. This endogenous envelope protein has lost its original fusogenic properties but has immunosuppressive properties in vivo. Its function is as follows. SU mediates receptor recognition. In terms of biological role, TM anchors the envelope heterodimer to the viral membrane through one transmembrane domain. The other hydrophobic domain, called fusion peptide, mediates fusion of the viral membrane with the target cell membrane. In Homo sapiens (Human), this protein is HERV-H_2q24.3 provirus ancestral Env polyprotein.